Reading from the N-terminus, the 105-residue chain is Large ribosomal subunit protein uL24 (105 aa).

The segment at 1–25 (MHIKKGDNVKVIAGKDKGKEGKVVS) is disordered.

It belongs to the universal ribosomal protein uL24 family. In terms of assembly, part of the 50S ribosomal subunit.

One of two assembly initiator proteins, it binds directly to the 5'-end of the 23S rRNA, where it nucleates assembly of the 50S subunit. Its function is as follows. One of the proteins that surrounds the polypeptide exit tunnel on the outside of the subunit. The chain is Large ribosomal subunit protein uL24 from Staphylococcus saprophyticus subsp. saprophyticus (strain ATCC 15305 / DSM 20229 / NCIMB 8711 / NCTC 7292 / S-41).